A 511-amino-acid polypeptide reads, in one-letter code: MEKNKRAIGFLLLVVLINGVMMTRSNGYEGEEEWGGAGGGEWGGAEGGGAWGGGGGGGGAWGGEGEGGGEWGGGGEGGGGGRRGWFMMRESRQVIKSEGGEMRVVLSPRGRIIEKPMHIGFLTMEPKTLFVPQYLDSSLLIFIRQGEATLGVICKDEFGERKLKAGDIYWIPAGSVFYLHNTGLGQRLHVICSIDPTQSLGFETFQPFYIGGGPSSVLAGFDPHTLTSAFNVSLPELQQMMMSQFRGPIVYVTEGPQPQPQSTVWTQFLGLRGEEKHKQLKKLLETKQGSPQDQQYSSGWSWRNIVRSILDLTEEKNKGSGSSECEDSYNIYDKKDKPSFDNKYGWSIALDYDDYKPLKHSGIGVYLVNLTAGAMMAPHMNPTATEYGIVLAGSGEIQVVFPNGTSAMNTRVSVGDVFWIPRYFAFCQIASRTGPFEFVGFTTSAHKNRPQFLVGSNSLLRTLNLTSLSIAFGVDEETMRRFIEAQREAVILPTPAAAPPHVGEMVSDRFV.

The signal sequence occupies residues 1–27; the sequence is MEKNKRAIGFLLLVVLINGVMMTRSNG. Residues 54 to 81 are disordered; sequence GGGGGGAWGGEGEGGGEWGGGGEGGGGG. Cupin type-1 domains lie at 86–238 and 329–480; these read FMMR…PELQ and YNIY…ETMR. N-linked (GlcNAc...) asparagine glycans are attached at residues Asn-231, Asn-369, Asn-403, and Asn-464.

Belongs to the 7S seed storage protein family.

In terms of biological role, seed storage protein. The sequence is that of Vicilin-like seed storage protein At2g28490 from Arabidopsis thaliana (Mouse-ear cress).